The sequence spans 204 residues: Protein GrpE (204 aa).

The tract at residues 1–55 (MSSKNNPESETKAKNKWEKVMEAEEEQEEGRGDGSQEMEPHREGLEFPSREKLEG) is disordered. Basic and acidic residues-rich tracts occupy residues 7–22 (PESE…KVME) and 29–55 (EGRG…KLEG).

It belongs to the GrpE family. In terms of assembly, homodimer.

The protein localises to the cytoplasm. Its function is as follows. Participates actively in the response to hyperosmotic and heat shock by preventing the aggregation of stress-denatured proteins, in association with DnaK and GrpE. It is the nucleotide exchange factor for DnaK and may function as a thermosensor. Unfolded proteins bind initially to DnaJ; upon interaction with the DnaJ-bound protein, DnaK hydrolyzes its bound ATP, resulting in the formation of a stable complex. GrpE releases ADP from DnaK; ATP binding to DnaK triggers the release of the substrate protein, thus completing the reaction cycle. Several rounds of ATP-dependent interactions between DnaJ, DnaK and GrpE are required for fully efficient folding. This Coxiella burnetii (strain RSA 331 / Henzerling II) protein is Protein GrpE.